Here is a 270-residue protein sequence, read N- to C-terminus: Formamidopyrimidine-DNA glycosylase (270 aa).

The active-site Schiff-base intermediate with DNA is the Pro2. The Proton donor role is filled by Glu3. Catalysis depends on Lys57, which acts as the Proton donor; for beta-elimination activity. DNA-binding residues include His90, Arg109, and Lys150. An FPG-type zinc finger spans residues Leu235–Lys269. The Proton donor; for delta-elimination activity role is filled by Arg259.

This sequence belongs to the FPG family. Monomer. The cofactor is Zn(2+).

It carries out the reaction Hydrolysis of DNA containing ring-opened 7-methylguanine residues, releasing 2,6-diamino-4-hydroxy-5-(N-methyl)formamidopyrimidine.. The catalysed reaction is 2'-deoxyribonucleotide-(2'-deoxyribose 5'-phosphate)-2'-deoxyribonucleotide-DNA = a 3'-end 2'-deoxyribonucleotide-(2,3-dehydro-2,3-deoxyribose 5'-phosphate)-DNA + a 5'-end 5'-phospho-2'-deoxyribonucleoside-DNA + H(+). Involved in base excision repair of DNA damaged by oxidation or by mutagenic agents. Acts as a DNA glycosylase that recognizes and removes damaged bases. Has a preference for oxidized purines, such as 7,8-dihydro-8-oxoguanine (8-oxoG). Has AP (apurinic/apyrimidinic) lyase activity and introduces nicks in the DNA strand. Cleaves the DNA backbone by beta-delta elimination to generate a single-strand break at the site of the removed base with both 3'- and 5'-phosphates. The protein is Formamidopyrimidine-DNA glycosylase of Histophilus somni (strain 129Pt) (Haemophilus somnus).